The following is a 352-amino-acid chain: Histidinol-phosphate aminotransferase 1 (352 aa).

K211 is modified (N6-(pyridoxal phosphate)lysine).

The protein belongs to the class-II pyridoxal-phosphate-dependent aminotransferase family. Histidinol-phosphate aminotransferase subfamily. Homodimer. Requires pyridoxal 5'-phosphate as cofactor.

The catalysed reaction is L-histidinol phosphate + 2-oxoglutarate = 3-(imidazol-4-yl)-2-oxopropyl phosphate + L-glutamate. It participates in amino-acid biosynthesis; L-histidine biosynthesis; L-histidine from 5-phospho-alpha-D-ribose 1-diphosphate: step 7/9. This is Histidinol-phosphate aminotransferase 1 from Haemophilus influenzae (strain 86-028NP).